The primary structure comprises 250 residues: rRNA methyltransferase 2, mitochondrial (250 aa).

A mitochondrion-targeting transit peptide spans 1-35 (MRLVFTGNCVFKRLLHTEIGGKYAKQQPRNLKGRS). Residues 90–93 (PGSW), D119, 136–137 (DF), and D161 contribute to the S-adenosyl-L-methionine site. K201 (proton acceptor) is an active-site residue.

This sequence belongs to the class I-like SAM-binding methyltransferase superfamily. RNA methyltransferase RlmE family.

It is found in the mitochondrion. The enzyme catalyses a uridine in rRNA + S-adenosyl-L-methionine = a 2'-O-methyluridine in rRNA + S-adenosyl-L-homocysteine + H(+). Functionally, S-adenosyl-L-methionine-dependent 2'-O-ribose methyltransferase that catalyzes the formation of 2'-O-methyluridine at position 1579 (Um1579) in the mitochondrial large subunit ribosomal RNA (mtLSU rRNA), a universally conserved modification in the peptidyl transferase domain of the mtLSU rRNA. This activity may require prior 2'-O-methylguanosine modification at position 1580 (Gm1580) by MRM3. Essential for late-stage assembly of mtLSU required for efficient translation of mitochondrial DNA encoded proteins; methyltransferase activity is not required for this function. Essential for mitochondrial respiratory function. The protein is rRNA methyltransferase 2, mitochondrial of Drosophila melanogaster (Fruit fly).